The sequence spans 429 residues: Enolase (429 aa).

Residue Gln-163 participates in (2R)-2-phosphoglycerate binding. The Proton donor role is filled by Glu-205. Mg(2+)-binding residues include Asp-242, Glu-287, and Asp-314. (2R)-2-phosphoglycerate is bound by residues Lys-339, Arg-368, Ser-369, and Lys-390. Lys-339 (proton acceptor) is an active-site residue.

The protein belongs to the enolase family. Requires Mg(2+) as cofactor.

It localises to the cytoplasm. The protein resides in the secreted. The protein localises to the cell surface. The catalysed reaction is (2R)-2-phosphoglycerate = phosphoenolpyruvate + H2O. The protein operates within carbohydrate degradation; glycolysis; pyruvate from D-glyceraldehyde 3-phosphate: step 4/5. Its function is as follows. Catalyzes the reversible conversion of 2-phosphoglycerate (2-PG) into phosphoenolpyruvate (PEP). It is essential for the degradation of carbohydrates via glycolysis. In Anaeromyxobacter dehalogenans (strain 2CP-1 / ATCC BAA-258), this protein is Enolase.